A 662-amino-acid polypeptide reads, in one-letter code: UvrABC system protein B (662 aa).

Residues 31-188 enclose the Helicase ATP-binding domain; it reads DNIEGGEKAQ…NDLVDIQFER (158 aa). 44–51 contacts ATP; that stretch reads GATGTGKT. The short motif at 97–120 is the Beta-hairpin element; that stretch reads YYDYYQPEAYVPSSDTYIEKDSSV. One can recognise a Helicase C-terminal domain in the interval 435 to 601; the sequence is QIDDLLGEIN…TIKKEIRDLI (167 aa). Positions 626–661 constitute a UVR domain; it reads KDMIKKLEGQMQEAAGLLDFELAAQIRDMILEIKAM.

It belongs to the UvrB family. As to quaternary structure, forms a heterotetramer with UvrA during the search for lesions. Interacts with UvrC in an incision complex.

The protein localises to the cytoplasm. The UvrABC repair system catalyzes the recognition and processing of DNA lesions. A damage recognition complex composed of 2 UvrA and 2 UvrB subunits scans DNA for abnormalities. Upon binding of the UvrA(2)B(2) complex to a putative damaged site, the DNA wraps around one UvrB monomer. DNA wrap is dependent on ATP binding by UvrB and probably causes local melting of the DNA helix, facilitating insertion of UvrB beta-hairpin between the DNA strands. Then UvrB probes one DNA strand for the presence of a lesion. If a lesion is found the UvrA subunits dissociate and the UvrB-DNA preincision complex is formed. This complex is subsequently bound by UvrC and the second UvrB is released. If no lesion is found, the DNA wraps around the other UvrB subunit that will check the other stand for damage. The protein is UvrABC system protein B of Streptococcus gordonii (strain Challis / ATCC 35105 / BCRC 15272 / CH1 / DL1 / V288).